The primary structure comprises 201 residues: 3-isopropylmalate dehydratase small subunit (201 aa).

The protein belongs to the LeuD family. LeuD type 1 subfamily. In terms of assembly, heterodimer of LeuC and LeuD.

The catalysed reaction is (2R,3S)-3-isopropylmalate = (2S)-2-isopropylmalate. It functions in the pathway amino-acid biosynthesis; L-leucine biosynthesis; L-leucine from 3-methyl-2-oxobutanoate: step 2/4. In terms of biological role, catalyzes the isomerization between 2-isopropylmalate and 3-isopropylmalate, via the formation of 2-isopropylmaleate. The sequence is that of 3-isopropylmalate dehydratase small subunit from Micrococcus luteus (strain ATCC 4698 / DSM 20030 / JCM 1464 / CCM 169 / CCUG 5858 / IAM 1056 / NBRC 3333 / NCIMB 9278 / NCTC 2665 / VKM Ac-2230) (Micrococcus lysodeikticus).